The chain runs to 77 residues: Translation initiation factor IF-1, chloroplastic (77 aa).

Residues 1-71 (MKEQKWIHEG…TKGRIIYRIR (71 aa)) enclose the S1-like domain.

Belongs to the IF-1 family. Component of the 30S ribosomal translation pre-initiation complex which assembles on the 30S ribosome in the order IF-2 and IF-3, IF-1 and N-formylmethionyl-tRNA(fMet); mRNA recruitment can occur at any time during PIC assembly.

It is found in the plastid. It localises to the chloroplast. In terms of biological role, one of the essential components for the initiation of protein synthesis. Stabilizes the binding of IF-2 and IF-3 on the 30S subunit to which N-formylmethionyl-tRNA(fMet) subsequently binds. Helps modulate mRNA selection, yielding the 30S pre-initiation complex (PIC). Upon addition of the 50S ribosomal subunit IF-1, IF-2 and IF-3 are released leaving the mature 70S translation initiation complex. In Vitis vinifera (Grape), this protein is Translation initiation factor IF-1, chloroplastic.